The primary structure comprises 446 residues: tRNA-2-methylthio-N(6)-dimethylallyladenosine synthase (446 aa).

An MTTase N-terminal domain is found at 6-122 (RRYHITTFGC…LGDLLQQVFD (117 aa)). [4Fe-4S] cluster-binding residues include C15, C51, C85, C157, C161, and C164. Positions 143–380 (RDSNITAWVN…NHLVATKAAE (238 aa)) constitute a Radical SAM core domain. In terms of domain architecture, TRAM spans 383–446 (QRYLGRIEEI…RPFSLTGVIF (64 aa)).

This sequence belongs to the methylthiotransferase family. MiaB subfamily. As to quaternary structure, monomer. It depends on [4Fe-4S] cluster as a cofactor.

The protein localises to the cytoplasm. It catalyses the reaction N(6)-dimethylallyladenosine(37) in tRNA + (sulfur carrier)-SH + AH2 + 2 S-adenosyl-L-methionine = 2-methylsulfanyl-N(6)-dimethylallyladenosine(37) in tRNA + (sulfur carrier)-H + 5'-deoxyadenosine + L-methionine + A + S-adenosyl-L-homocysteine + 2 H(+). Functionally, catalyzes the methylthiolation of N6-(dimethylallyl)adenosine (i(6)A), leading to the formation of 2-methylthio-N6-(dimethylallyl)adenosine (ms(2)i(6)A) at position 37 in tRNAs that read codons beginning with uridine. This Microcystis aeruginosa (strain NIES-843 / IAM M-2473) protein is tRNA-2-methylthio-N(6)-dimethylallyladenosine synthase.